We begin with the raw amino-acid sequence, 355 residues long: Probable protein phosphatase 2C 21 (355 aa).

The PPM-type phosphatase domain maps to 23 to 329; it reads RFGLSSMQGW…DNMTIILVQF (307 aa). Positions 57, 58, 272, and 320 each coordinate Mn(2+). The interval 329-355 is disordered; the sequence is FKKPNPSETEPEDSKPEPSEDEPSSSS.

This sequence belongs to the PP2C family. It depends on Mg(2+) as a cofactor. Mn(2+) serves as cofactor.

It catalyses the reaction O-phospho-L-seryl-[protein] + H2O = L-seryl-[protein] + phosphate. It carries out the reaction O-phospho-L-threonyl-[protein] + H2O = L-threonyl-[protein] + phosphate. This chain is Probable protein phosphatase 2C 21 (PPC4-2), found in Arabidopsis thaliana (Mouse-ear cress).